Here is a 361-residue protein sequence, read N- to C-terminus: G-protein coupled receptor 52 (361 aa).

Residues 1–44 (MNESRWTEWRILNMSSSIVNVSEHHSCPLGFGHYSVEDVCIFET) lie on the Extracellular side of the membrane. Asn2, Asn13, and Asn20 each carry an N-linked (GlcNAc...) asparagine glycan. The helical transmembrane segment at 45-65 (VVIVLLTFLIISGNLTVIFVF) threads the bilayer. The Cytoplasmic portion of the chain corresponds to 66–81 (HCAPLLHHYTTSYFIQ). Residues 82-102 (TMAYADLLVGVTCLVPTLSLL) traverse the membrane as a helical segment. At 103–115 (HYSTGVHESLTCQ) the chain is on the extracellular side. A disulfide bridge connects residues Cys114 and Cys193. A helical membrane pass occupies residues 116–136 (VFGYIISVLKSVSMACLACIS). The Cytoplasmic portion of the chain corresponds to 137–159 (VDRYLAITKPLSYNQLVTPCRLR). The helical transmembrane segment at 160–180 (ICIIMIWIYSCLIFLPSFFGW) threads the bilayer. At 181 to 205 (GKPGYHGDIFEWCATSWLTSAYFTC) the chain is on the extracellular side. A helical membrane pass occupies residues 206–226 (FIVCLLYAPAALVVCFTYFHI). Topologically, residues 227 to 265 (FKICRQHTKEINDRRARFPSHEVEASREAGHSPDRRYAM) are cytoplasmic. The helical transmembrane segment at 266-286 (VLFRITSVFYMLWLPYIIYFL) threads the bilayer. At 287 to 296 (LESSRVLDNP) the chain is on the extracellular side. Residues 297–317 (TLSFLTTWLAISNSFCNCVIY) form a helical membrane-spanning segment. The Cytoplasmic portion of the chain corresponds to 318–361 (SLSNSVFRLGLRRLSETMCTSCVCAKDQEAQDPKPRRRANSCSI).

The protein belongs to the G-protein coupled receptor 1 family. In terms of tissue distribution, expressed in brain, especially in striatum. Expressed in the striatum, nucleus accumbens, and lateral globus pallidus.

It is found in the cell membrane. In terms of biological role, G- protein coupled receptor activated by antipsychotics reserpine leading to an increase in intracellular cAMP and its internalization. May play a role in locomotor activity through modulation of dopamine, NMDA and ADORA2A-induced locomotor activity. These behavioral changes are accompanied by modulation of the dopamine receptor signaling pathway in striatum. Modulates HTT level via cAMP-dependent but PKA independent mechanisms throught activation of RAB39B that translocates HTT to the endoplasmic reticulum, thus avoiding proteasome degradation. The protein is G-protein coupled receptor 52 of Mus musculus (Mouse).